Consider the following 483-residue polypeptide: Proline--tRNA ligase (483 aa).

Belongs to the class-II aminoacyl-tRNA synthetase family. ProS type 3 subfamily. As to quaternary structure, homodimer.

It is found in the cytoplasm. It catalyses the reaction tRNA(Pro) + L-proline + ATP = L-prolyl-tRNA(Pro) + AMP + diphosphate. Catalyzes the attachment of proline to tRNA(Pro) in a two-step reaction: proline is first activated by ATP to form Pro-AMP and then transferred to the acceptor end of tRNA(Pro). The protein is Proline--tRNA ligase of Natranaerobius thermophilus (strain ATCC BAA-1301 / DSM 18059 / JW/NM-WN-LF).